The primary structure comprises 283 residues: Shikimate kinase (283 aa).

86-96 is an ATP binding site; that stretch reads PLKSGLSSSSA.

This sequence belongs to the GHMP kinase family. Archaeal shikimate kinase subfamily.

It localises to the cytoplasm. It catalyses the reaction shikimate + ATP = 3-phosphoshikimate + ADP + H(+). The protein operates within metabolic intermediate biosynthesis; chorismate biosynthesis; chorismate from D-erythrose 4-phosphate and phosphoenolpyruvate: step 5/7. The sequence is that of Shikimate kinase from Methanococcus vannielii (strain ATCC 35089 / DSM 1224 / JCM 13029 / OCM 148 / SB).